The following is a 1321-amino-acid chain: Lysine-specific demethylase 3A (1321 aa).

S264 and S325 each carry phosphoserine. 3 disordered regions span residues 307-336 (ATPP…IPQG), 383-402 (LTEP…QENR), and 438-472 (KHLE…GKKV). The segment covering 316–327 (QQSTPQAANSPP) has biased composition (polar residues). S445 carries the phosphoserine modification. The segment at 662–687 (CDVCDTTIFNLHWVCPRCGFGVCVDC) adopts a C6-type zinc-finger fold. S766 carries the post-translational modification Phosphoserine. Residues 885 to 889 (LRNLL) carry the LXXLL motif motif. K895 is modified (N6-acetyllysine). The JmjC domain maps to 1058–1281 (MPSRFDDLMA…HCFWLTQEFR (224 aa)). Residues H1120, D1122, and H1249 each coordinate Fe cation.

Belongs to the JHDM2 histone demethylase family. In terms of assembly, interacts with VRK1. The cofactor is Fe(2+).

It is found in the cytoplasm. The protein resides in the nucleus. It catalyses the reaction N(6),N(6)-dimethyl-L-lysyl(9)-[histone H3] + 2 2-oxoglutarate + 2 O2 = L-lysyl(9)-[histone H3] + 2 formaldehyde + 2 succinate + 2 CO2. Histone demethylase that specifically demethylates 'Lys-9' of histone H3, thereby playing a central role in histone code. Preferentially demethylates mono- and dimethylated H3 'Lys-9' residue, with a preference for dimethylated residue, while it has weak or no activity on trimethylated H3 'Lys-9'. Demethylation of Lys residue generates formaldehyde and succinate. Involved in hormone-dependent transcriptional activation, by participating in recruitment to androgen-receptor target genes, resulting in H3 'Lys-9' demethylation and transcriptional activation. Involved in spermatogenesis by regulating expression of target genes such as PRM1 and TNP1 which are required for packaging and condensation of sperm chromatin. Involved in obesity resistance through regulation of metabolic genes such as PPARA and UCP1. This is Lysine-specific demethylase 3A (KDM3A) from Homo sapiens (Human).